Consider the following 239-residue polypeptide: Ribonuclease HII (239 aa).

The region spanning 30–221 (GPVAGVDEVG…VRRVATRSNG (192 aa)) is the RNase H type-2 domain. A divalent metal cation is bound by residues D36, E37, and D130. A disordered region spans residues 217-239 (TRSNGAATAEREADPPQERDGTG). A compositionally biased stretch (basic and acidic residues) spans 225–239 (AEREADPPQERDGTG).

The protein belongs to the RNase HII family. Mn(2+) is required as a cofactor. It depends on Mg(2+) as a cofactor.

The protein resides in the cytoplasm. It carries out the reaction Endonucleolytic cleavage to 5'-phosphomonoester.. In terms of biological role, endonuclease that specifically degrades the RNA of RNA-DNA hybrids. This chain is Ribonuclease HII, found in Mycobacterium ulcerans (strain Agy99).